We begin with the raw amino-acid sequence, 269 residues long: UPF0162 protein YchA (269 aa).

Belongs to the UPF0162 family.

In Escherichia coli O157:H7, this protein is UPF0162 protein YchA (ychA).